We begin with the raw amino-acid sequence, 319 residues long: tRNA dimethylallyltransferase (319 aa).

ATP is bound at residue 26–33 (GPTAAGKS). 28–33 (TAAGKS) provides a ligand contact to substrate. The segment at 51-54 (DSMQ) is interaction with substrate tRNA.

This sequence belongs to the IPP transferase family. Monomer. The cofactor is Mg(2+).

The enzyme catalyses adenosine(37) in tRNA + dimethylallyl diphosphate = N(6)-dimethylallyladenosine(37) in tRNA + diphosphate. Its function is as follows. Catalyzes the transfer of a dimethylallyl group onto the adenine at position 37 in tRNAs that read codons beginning with uridine, leading to the formation of N6-(dimethylallyl)adenosine (i(6)A). The polypeptide is tRNA dimethylallyltransferase (Salinispora tropica (strain ATCC BAA-916 / DSM 44818 / JCM 13857 / NBRC 105044 / CNB-440)).